The chain runs to 69 residues: uncharacterized protein (69 aa).

The Cytoplasmic segment spans residues 1-15 (MLLYIVIIVACIISK). A helical transmembrane segment spans residues 16–36 (LVPNEYWAIHLFFIIMIFMVY). Over 37–69 (MYEKLDIHQKYQFWNYTMSGLSGHNVQITCKCY) the chain is Extracellular. An N-linked (GlcNAc...) asparagine; by host glycan is attached at Asn-51.

It belongs to the asfivirus X69R family.

It is found in the host membrane. This is an uncharacterized protein from Ornithodoros (relapsing fever ticks).